The sequence spans 808 residues: Transcription activator of gluconeogenesis PAAG_01030 (808 aa).

Residues 1–90 (MTSSVRNGSP…SAKDPLRPRR (90 aa)) are disordered. Residues 69 to 83 (STSSTAASANNASAK) are compositionally biased toward low complexity. Positions 97-125 (CFACQRAHLTCGDERPCQRCIKRGLQDTC) form a DNA-binding region, zn(2)-C6 fungal-type. A compositionally biased stretch (polar residues) spans 158–170 (AARNKVNSNSQQR). Disordered stretches follow at residues 158–203 (AARN…FSTP), 236–285 (SAFQ…YGST), 322–387 (GAGD…IYNQ), 442–461 (PPTNTQHQQQPQPPRISTPS), and 598–629 (TGGSSSSGVSSRGSSTYNSRNSATTTVMDNQS). Residues 171-188 (NGTNSNSDNNSTNTNSNN) show a composition bias toward low complexity. 4 stretches are compositionally biased toward polar residues: residues 189–203 (KPSHQDVSTNFFSTP), 248–279 (FDLSSNPQNHTLSPSIAQNSGTTPSSSASQNP), 339–359 (GRSSGTFTVQNFGEGSSNQSP), and 377–387 (GPTNPRNIYNQ). 2 stretches are compositionally biased toward low complexity: residues 442–451 (PPTNTQHQQQ) and 598–619 (TGGSSSSGVSSRGSSTYNSRNS). Over residues 620 to 629 (ATTTVMDNQS) the composition is skewed to polar residues.

It belongs to the ERT1/acuK family.

The protein resides in the nucleus. In terms of biological role, transcription factor which regulates nonfermentable carbon utilization. Activator of gluconeogenetic genes. The protein is Transcription activator of gluconeogenesis PAAG_01030 of Paracoccidioides lutzii (strain ATCC MYA-826 / Pb01) (Paracoccidioides brasiliensis).